Here is an 881-residue protein sequence, read N- to C-terminus: Probable intermembrane transport protein HI_1672 (881 aa).

The helical transmembrane segment at 30 to 49 threads the bilayer; the sequence is FWLLPFIALCIGAILFFQIV.

It belongs to the PqiB family.

The protein resides in the cell inner membrane. The polypeptide is Probable intermembrane transport protein HI_1672 (Haemophilus influenzae (strain ATCC 51907 / DSM 11121 / KW20 / Rd)).